Here is a 1245-residue protein sequence, read N- to C-terminus: ATP-dependent helicase/deoxyribonuclease subunit B (1245 aa).

The disordered stretch occupies residues tryptophan 737–glutamate 758. The span at leucine 748–glutamate 758 shows a compositional bias: basic and acidic residues.

It belongs to the helicase family. AddB/RexB type 2 subfamily. In terms of assembly, heterodimer of AddA and RexB. Requires Mg(2+) as cofactor.

The heterodimer acts as both an ATP-dependent DNA helicase and an ATP-dependent, dual-direction single-stranded exonuclease. Recognizes the chi site generating a DNA molecule suitable for the initiation of homologous recombination. This subunit has 5' -&gt; 3' nuclease activity but not helicase activity. The sequence is that of ATP-dependent helicase/deoxyribonuclease subunit B from Limosilactobacillus fermentum (strain NBRC 3956 / LMG 18251) (Lactobacillus fermentum).